Consider the following 181-residue polypeptide: ECF RNA polymerase sigma factor EcfG (181 aa).

Residues 15–77 form a sigma-70 factor domain-2 region; that stretch reads VPSLRAFAIS…FRSDYRKRRR (63 aa). A sigma-70 factor domain-4 region spans residues 103 to 155; sequence EEFRAALDKLPQDQREALILVGASGFSYEDAAAICGCAVGTIKSRVNRARSKL.

The protein belongs to the sigma-70 factor family. ECF subfamily.

In terms of biological role, sigma factors are initiation factors that promote the attachment of RNA polymerase to specific initiation sites and are then released. Regulates expression of hpnP under a variety of stresses, including high temperature, pH stress, and presence of nonionic osmolytes. The sequence is that of ECF RNA polymerase sigma factor EcfG from Rhodopseudomonas palustris (strain TIE-1).